The primary structure comprises 496 residues: Ribose import ATP-binding protein RbsA (496 aa).

ABC transporter domains are found at residues leucine 5–glutamate 241 and serine 252–glutamate 496. Glycine 37–serine 44 serves as a coordination point for ATP.

It belongs to the ABC transporter superfamily. Ribose importer (TC 3.A.1.2.1) family. The complex is composed of an ATP-binding protein (RbsA), two transmembrane proteins (RbsC) and a solute-binding protein (RbsB).

The protein resides in the cell membrane. It carries out the reaction D-ribose(out) + ATP + H2O = D-ribose(in) + ADP + phosphate + H(+). Its function is as follows. Part of the ABC transporter complex RbsABC involved in ribose import. Responsible for energy coupling to the transport system. The protein is Ribose import ATP-binding protein RbsA of Caldanaerobacter subterraneus subsp. tengcongensis (strain DSM 15242 / JCM 11007 / NBRC 100824 / MB4) (Thermoanaerobacter tengcongensis).